Consider the following 88-residue polypeptide: Defensin-like protein 267 (88 aa).

The N-terminal stretch at 1–23 (MMLSKVVLLALLLSLSCLWVAKA) is a signal peptide. Cystine bridges form between Cys45/Cys63, Cys51/Cys68, and Cys55/Cys70.

The protein belongs to the DEFL family.

It is found in the secreted. The chain is Defensin-like protein 267 from Arabidopsis thaliana (Mouse-ear cress).